The following is a 385-amino-acid chain: Zinc finger protein B385R (385 aa).

The segment at 166–190 (LQCPNCGCIQELMGTIFDETHFYNH) adopts a C2H2-type zinc-finger fold.

Belongs to the asfivirus B385R family.

The chain is Zinc finger protein B385R from Ornithodoros (relapsing fever ticks).